The following is a 329-amino-acid chain: Biotin synthase (329 aa).

Residues phenylalanine 46–serine 275 enclose the Radical SAM core domain. 3 residues coordinate [4Fe-4S] cluster: cysteine 64, cysteine 68, and cysteine 71. [2Fe-2S] cluster is bound by residues cysteine 108, cysteine 140, cysteine 200, and arginine 273.

It belongs to the radical SAM superfamily. Biotin synthase family. Homodimer. It depends on [4Fe-4S] cluster as a cofactor. [2Fe-2S] cluster serves as cofactor.

It carries out the reaction (4R,5S)-dethiobiotin + (sulfur carrier)-SH + 2 reduced [2Fe-2S]-[ferredoxin] + 2 S-adenosyl-L-methionine = (sulfur carrier)-H + biotin + 2 5'-deoxyadenosine + 2 L-methionine + 2 oxidized [2Fe-2S]-[ferredoxin]. It functions in the pathway cofactor biosynthesis; biotin biosynthesis; biotin from 7,8-diaminononanoate: step 2/2. In terms of biological role, catalyzes the conversion of dethiobiotin (DTB) to biotin by the insertion of a sulfur atom into dethiobiotin via a radical-based mechanism. The chain is Biotin synthase from Thermus thermophilus (strain ATCC BAA-163 / DSM 7039 / HB27).